A 160-amino-acid chain; its full sequence is Large ribosomal subunit protein bL19 (160 aa).

Basic and acidic residues-rich tracts occupy residues 1–15 (MTED…KEES) and 28–39 (ATRETKPKDSPS). Residues 1–44 (MTEDLKNTSPSKEESNEIEESSKATPKATRETKPKDSPSKTKLS) form a disordered region.

It belongs to the bacterial ribosomal protein bL19 family.

Functionally, this protein is located at the 30S-50S ribosomal subunit interface and may play a role in the structure and function of the aminoacyl-tRNA binding site. This Prochlorococcus marinus (strain SARG / CCMP1375 / SS120) protein is Large ribosomal subunit protein bL19.